The following is a 393-amino-acid chain: Tryptophan 2,3-dioxygenase (393 aa).

Substrate contacts are provided by residues 56 to 60 and Arg-127; that span reads FIVTH. His-312 lines the heme pocket. Substrate is bound at residue Thr-327.

The protein belongs to the tryptophan 2,3-dioxygenase family. Homotetramer. Dimer of dimers. Heme serves as cofactor.

It carries out the reaction L-tryptophan + O2 = N-formyl-L-kynurenine. It functions in the pathway amino-acid degradation; L-tryptophan degradation via kynurenine pathway; L-kynurenine from L-tryptophan: step 1/2. Its pathway is pigment biosynthesis; ommochrome biosynthesis. Stimulated by low concentrations of hydrogen peroxide (5 uM), ascorbate (0.1-0.3 mM), and sodium hydrosulfite (0.1 mM). Inhibited by high concentrations of hydrogen peroxide (0.1 mM), ascorbate (10 mM), and sodium hydrosulfite (1 mM). Its function is as follows. Heme-dependent dioxygenase that catalyzes the oxidative cleavage of the L-tryptophan (L-Trp) pyrrole ring and converts L-tryptophan to N-formyl-L-kynurenine. Catalyzes the oxidative cleavage of the indole moiety. The sequence is that of Tryptophan 2,3-dioxygenase from Aedes aegypti (Yellowfever mosquito).